Here is a 308-residue protein sequence, read N- to C-terminus: Alpha/beta hydrolase domain-containing protein WAV2 (308 aa).

A helical transmembrane segment spans residues 6–26 (SALFYGFGGIVVAGVALLVAF). Active-site charge relay system residues include Ser-159, Asp-243, and Arg-308.

It belongs to the serine esterase family. Expressed in roots, rosette leaves, stems and flowers.

The protein resides in the cell membrane. In terms of biological role, involved in the regulation of root growth. Involved in the suppression of the root bending in response to touch stimuli, gravity and light. Negatively regulates stimulus-induced root bending through inhibition of root tip rotation. The chain is Alpha/beta hydrolase domain-containing protein WAV2 from Arabidopsis thaliana (Mouse-ear cress).